The following is a 497-amino-acid chain: Tripartite motif-containing protein 5 (497 aa).

N-acetylalanine is present on A2. The RING-type zinc-finger motif lies at 15 to 60; that stretch reads CPICLELLTEPLSLPCGHSFCQACITANHRKSMLYKEGERSCPVCR. A Phosphoserine modification is found at S87. A B box-type zinc finger spans residues 92 to 133; that stretch reads LKVDHCARHGEKLLLFCQEDSKVICWLCERSQEHRGHHTFLM. Zn(2+)-binding residues include C97, H100, C119, and H125. A coiled-coil region spans residues 137-225; sequence AQEYHVKLQT…LTKSETEMVQ (89 aa). A required for interaction with GABARAP and for autophagy region spans residues 187–200; the sequence is FEQLREILDWEESN. One can recognise a B30.2/SPRY domain in the interval 283 to 497; sequence LKGMLDMFRE…VPMTLCSPSS (215 aa).

Belongs to the TRIM/RBCC family. Can form homodimers and homotrimers. In addition to lower-order dimerization, also exhibits a higher-order multimerization and both low- and high-order multimerizations are essential for its restriction activity. Interacts with BTBD1 and BTBD2. Interacts with PSMC4, PSMC5, PSMD7 and HSPA8/HSC70. Interacts (via B30.2/SPRY domain) with HSPA1A/B. Interacts with PSMC2, MAP3K7/TAK1, TAB2 and TAB3. Interacts with SQSTM1. Interacts with TRIM6 and TRIM34. Interacts with ULK1 (phosphorylated form), GABARAP, GABARAPL1, GABARAPL2, MAP1LC3A, MAP1LC3C and BECN1. In terms of processing, degraded in a proteasome-independent fashion in the absence of viral infection but in a proteasome-dependent fashion following exposure to restriction sensitive virus. Post-translationally, autoubiquitinated in a RING finger- and UBE2D2-dependent manner. Monoubiquitinated by TRIM21. Deubiquitinated by Yersinia YopJ. Ubiquitination may not lead to proteasomal degradation.

The protein resides in the cytoplasm. Its subcellular location is the nucleus. The catalysed reaction is S-ubiquitinyl-[E2 ubiquitin-conjugating enzyme]-L-cysteine + [acceptor protein]-L-lysine = [E2 ubiquitin-conjugating enzyme]-L-cysteine + N(6)-ubiquitinyl-[acceptor protein]-L-lysine.. It participates in protein modification; protein ubiquitination. In terms of biological role, capsid-specific restriction factor that prevents infection from non-host-adapted retroviruses. Blocks viral replication early in the life cycle, after viral entry but before reverse transcription. In addition to acting as a capsid-specific restriction factor, also acts as a pattern recognition receptor that activates innate immune signaling in response to the retroviral capsid lattice. Binding to the viral capsid triggers its E3 ubiquitin ligase activity, and in concert with the heterodimeric ubiquitin conjugating enzyme complex UBE2V1-UBE2N (also known as UBC13-UEV1A complex) generates 'Lys-63'-linked polyubiquitin chains, which in turn are catalysts in the autophosphorylation of the MAP3K7/TAK1 complex (includes TAK1, TAB2, and TAB3). Activation of the MAP3K7/TAK1 complex by autophosphorylation results in the induction and expression of NF-kappa-B and MAPK-responsive inflammatory genes, thereby leading to an innate immune response in the infected cell. Plays a role in regulating autophagy through activation of autophagy regulator BECN1 by causing its dissociation from its inhibitors BCL2 and TAB2. The polypeptide is Tripartite motif-containing protein 5 (TRIM5) (Papio anubis (Olive baboon)).